Consider the following 579-residue polypeptide: Keratinocyte proline-rich protein (579 aa).

The residue at position 394 (Ser394) is a Phosphoserine. Positions 526–579 are disordered; that stretch reads EAPYCGPSSYNQGQESGAGCGPGDVFPERRGQDGHGDQGNAFAGVKGEAKSAYF. The span at 551-561 shows a compositional bias: basic and acidic residues; it reads FPERRGQDGHG.

Expressed in the upper layer of epidermis and psoriasis (at protein level). Expressed in the upper layer of epidermis and psoriasis.

It localises to the cytoplasm. This chain is Keratinocyte proline-rich protein (KPRP), found in Homo sapiens (Human).